The primary structure comprises 62 residues: Large ribosomal subunit protein eL37 (62 aa).

Residues Cys20, Cys23, Cys35, and Cys38 each contribute to the Zn(2+) site. Residues 20-38 (CRRCGRRSYNVAKGYCAAC) form a C4-type zinc finger.

Belongs to the eukaryotic ribosomal protein eL37 family. Zn(2+) serves as cofactor.

Binds to the 23S rRNA. The polypeptide is Large ribosomal subunit protein eL37 (rpl37e) (Aeropyrum pernix (strain ATCC 700893 / DSM 11879 / JCM 9820 / NBRC 100138 / K1)).